An 84-amino-acid polypeptide reads, in one-letter code: U2-theraphotoxin-Cg1b 1 (84 aa).

The first 21 residues, 1-21 (MKVSVLITLAVWGVMFLLTSA), serve as a signal peptide directing secretion. Positions 22–48 (QERGSDQMDSPAWLKSMERIFQSEERE) are excised as a propeptide. Cystine bridges form between C49/C63, C56/C68, and C62/C76.

It belongs to the neurotoxin 10 (Hwtx-1) family. 06 (F4b) subfamily. As to expression, expressed by the venom gland.

It is found in the secreted. In terms of biological role, probable ion channel inhibitor. This Chilobrachys guangxiensis (Chinese earth tiger tarantula) protein is U2-theraphotoxin-Cg1b 1.